The chain runs to 227 residues: Protein CAP22 (227 aa).

2 N-linked (GlcNAc...) asparagine glycosylation sites follow: asparagine 55 and asparagine 72. Positions 143–162 (TTIGGGATPAPTSERSRTSD) are disordered.

It is found in the secreted. The protein localises to the cell wall. This Colletotrichum gloeosporioides (Anthracnose fungus) protein is Protein CAP22 (CAP22).